The primary structure comprises 276 residues: MPALKVIATPIGNIEEVSPRVKAALTKCEVLFCEDTRVTKKLLGLLGIDFSNKQFIINNEFKEKQNLSKVANLIHQYHCGLVSDAGYPSVSDPGHILVEYVRTQLPQIAIEVINGPSALVCGLVTSGFPESPLLFLGFLDHKPTQVTQTLKHYQNFQGTIVLFEAVHRLQQTLEVIQTVFSNTEVFVGRELTKLHESHYWFNTSAPLPDITLKGEFVIVINNHHTQPVGQYSDQLLKQEITQLVQMGVKVKDACHYLAKRLQLKSNKLYTLFHESD.

This sequence belongs to the methyltransferase superfamily. RsmI family.

The protein resides in the cytoplasm. It catalyses the reaction cytidine(1402) in 16S rRNA + S-adenosyl-L-methionine = 2'-O-methylcytidine(1402) in 16S rRNA + S-adenosyl-L-homocysteine + H(+). Catalyzes the 2'-O-methylation of the ribose of cytidine 1402 (C1402) in 16S rRNA. This Mycoplasma pneumoniae (strain ATCC 29342 / M129 / Subtype 1) (Mycoplasmoides pneumoniae) protein is Ribosomal RNA small subunit methyltransferase I.